The following is a 144-amino-acid chain: Acidic phospholipase A2 S15-109 (144 aa).

A signal peptide spans M1–A19. The propeptide occupies S20–L27. 7 cysteine pairs are disulfide-bonded: C38–C98, C54–C143, C56–C72, C71–C126, C78–C119, C87–C112, and C105–C117. The Ca(2+) site is built by Y55, G57, and G59. Residue H75 is part of the active site. D76 provides a ligand contact to Ca(2+). D120 is an active-site residue.

This sequence belongs to the phospholipase A2 family. Group I subfamily. D49 sub-subfamily. The cofactor is Ca(2+). As to expression, expressed by the venom gland.

It is found in the secreted. It carries out the reaction a 1,2-diacyl-sn-glycero-3-phosphocholine + H2O = a 1-acyl-sn-glycero-3-phosphocholine + a fatty acid + H(+). In terms of biological role, snake venom phospholipase A2 (PLA2) that inhibits collagen-induced platelet aggregation. PLA2 catalyzes the calcium-dependent hydrolysis of the 2-acyl groups in 3-sn-phosphoglycerides. The polypeptide is Acidic phospholipase A2 S15-109 (Austrelaps superbus (Lowland copperhead snake)).